Here is a 117-residue protein sequence, read N- to C-terminus: Large ribosomal subunit protein uL24 (117 aa).

The protein belongs to the universal ribosomal protein uL24 family. As to quaternary structure, part of the 50S ribosomal subunit.

Its function is as follows. One of two assembly initiator proteins, it binds directly to the 5'-end of the 23S rRNA, where it nucleates assembly of the 50S subunit. Located at the polypeptide exit tunnel on the outside of the subunit. In Methanothermobacter thermautotrophicus (strain ATCC 29096 / DSM 1053 / JCM 10044 / NBRC 100330 / Delta H) (Methanobacterium thermoautotrophicum), this protein is Large ribosomal subunit protein uL24.